Reading from the N-terminus, the 315-residue chain is Olfactory receptor 4A5 (315 aa).

Residues 1 to 23 (MRQNNNITEFVLLGFSQDPGVQK) are Extracellular-facing. Asn6 is a glycosylation site (N-linked (GlcNAc...) asparagine). A helical transmembrane segment spans residues 24–47 (ALFVMFLLTYLVTVVGNLLIVVDI). Topologically, residues 48–55 (IASPSLGS) are cytoplasmic. A helical membrane pass occupies residues 56-77 (PMYFFLACLSFIDAAYSTTISP). Over 78 to 98 (KLIVGLFCDKKTISFQGCMGQ) the chain is Extracellular. An intrachain disulfide couples Cys95 to Cys186. Residues 99–118 (LFIDHFFGGAEVFLLVVMAC) traverse the membrane as a helical segment. Topologically, residues 119 to 137 (DRYVAICKPLHYLTIMNRQ) are cytoplasmic. A helical transmembrane segment spans residues 138 to 156 (VCFLLLVVAMIGGFVHSAF). The Extracellular portion of the chain corresponds to 157–192 (QIVVYSLPFCGPNVIVHFSCDMHPLLELACTDTYFI). A helical transmembrane segment spans residues 193–216 (GLTVVVNSGAICMVIFNLLLISYG). The Cytoplasmic portion of the chain corresponds to 217-232 (VILSSLKTYSQEKRGK). A helical membrane pass occupies residues 233-255 (ALSTCSSGSTVVVLFFVPCIFIY). Topologically, residues 256 to 266 (VRPVSNFPTDK) are extracellular. The helical transmembrane segment at 267-286 (FMTVFYTIITHMLSPLIYTL) threads the bilayer. The Cytoplasmic segment spans residues 287–315 (RNSEMRNAIEKLLGKKLTIFIIGGVSVLM).

This sequence belongs to the G-protein coupled receptor 1 family.

It localises to the cell membrane. In terms of biological role, odorant receptor. This is Olfactory receptor 4A5 (OR4A5) from Homo sapiens (Human).